Here is a 430-residue protein sequence, read N- to C-terminus: Elongation factor 1-alpha (430 aa).

One can recognise a tr-type G domain in the interval 7-219 (KPHVNIVFIG…DQIPEPEKPV (213 aa)). The segment at 16–23 (GHVDHGKS) is G1. 16–23 (GHVDHGKS) lines the GTP pocket. Mg(2+) is bound at residue S23. Residues 70–74 (GITID) are G2. Residues 91–94 (DAPG) are G3. GTP is bound by residues 91–95 (DAPGH) and 146–149 (NKMD). The G4 stretch occupies residues 146 to 149 (NKMD). Residues 183–185 (SAW) are G5.

Belongs to the TRAFAC class translation factor GTPase superfamily. Classic translation factor GTPase family. EF-Tu/EF-1A subfamily.

The protein resides in the cytoplasm. The enzyme catalyses GTP + H2O = GDP + phosphate + H(+). Its function is as follows. GTP hydrolase that promotes the GTP-dependent binding of aminoacyl-tRNA to the A-site of ribosomes during protein biosynthesis. The polypeptide is Elongation factor 1-alpha (Pyrococcus woesei).